Reading from the N-terminus, the 396-residue chain is Acetylornithine aminotransferase 2 (396 aa).

Residues 102–103 (GA) and F134 each bind pyridoxal 5'-phosphate. Residue R137 participates in N(2)-acetyl-L-ornithine binding. Pyridoxal 5'-phosphate is bound at residue 219–222 (DEVQ). K248 carries the post-translational modification N6-(pyridoxal phosphate)lysine. Position 276 (T276) interacts with pyridoxal 5'-phosphate.

Belongs to the class-III pyridoxal-phosphate-dependent aminotransferase family. ArgD subfamily. Homodimer. Pyridoxal 5'-phosphate serves as cofactor.

Its subcellular location is the cytoplasm. The catalysed reaction is N(2)-acetyl-L-ornithine + 2-oxoglutarate = N-acetyl-L-glutamate 5-semialdehyde + L-glutamate. It functions in the pathway amino-acid biosynthesis; L-arginine biosynthesis; N(2)-acetyl-L-ornithine from L-glutamate: step 4/4. This chain is Acetylornithine aminotransferase 2, found in Bordetella pertussis (strain Tohama I / ATCC BAA-589 / NCTC 13251).